A 270-amino-acid chain; its full sequence is Ethanolamine ammonia-lyase small subunit (270 aa).

Adenosylcob(III)alamin-binding residues include valine 166, glutamate 187, and cysteine 216.

The protein belongs to the EutC family. As to quaternary structure, the basic unit is a heterodimer which dimerizes to form tetramers. The heterotetramers trimerize; 6 large subunits form a core ring with 6 small subunits projecting outwards. Requires adenosylcob(III)alamin as cofactor.

It localises to the bacterial microcompartment. It catalyses the reaction ethanolamine = acetaldehyde + NH4(+). Its pathway is amine and polyamine degradation; ethanolamine degradation. Its function is as follows. Catalyzes the deamination of various vicinal amino-alcohols to oxo compounds. Allows this organism to utilize ethanolamine as the sole source of nitrogen and carbon in the presence of external vitamin B12. The chain is Ethanolamine ammonia-lyase small subunit from Ralstonia nicotianae (strain ATCC BAA-1114 / GMI1000) (Ralstonia solanacearum).